The primary structure comprises 350 residues: Nuclear pore complex-interacting protein family member A3 (350 aa).

Residues 306-325 (KTPPECLLTPLPPSAPPSVD) form a disordered region.

This sequence belongs to the NPIP family.

This is Nuclear pore complex-interacting protein family member A3 (NPIPA3) from Homo sapiens (Human).